The chain runs to 206 residues: Max dimerization protein 3 (206 aa).

The interaction with SIN3A and SIN3B stretch occupies residues 8–25 (IQVLLQAAEFLERREREA). Disordered regions lie at residues 29–66 (YASL…NELE) and 122–171 (KLRS…QEDL). The region spanning 57 to 109 (SGRSVHNELEKRRRAQLKRCLEQLRQQMPLGVDCTRYTTLSLLRRARVHIQKL) is the bHLH domain. Residues 126–138 (KQQSLQQQLEQLQ) are compositionally biased toward low complexity. The span at 143–153 (ARERERLRADS) shows a compositional bias: basic and acidic residues.

In terms of assembly, efficient DNA binding requires dimerization with another bHLH protein. Binds DNA as a heterodimer with MAX. Interacts with SIN3A AND SIN3B. Interacts with RNF17. Expressed only in the proliferating areas of the testis and thymus.

The protein resides in the nucleus. In terms of biological role, transcriptional repressor. Binds with MAX to form a sequence-specific DNA-binding protein complex which recognizes the core sequence 5'-CAC[GA]TG-3'. Antagonizes MYC transcriptional activity by competing for MAX and suppresses MYC dependent cell transformation. The sequence is that of Max dimerization protein 3 (Mxd3) from Mus musculus (Mouse).